Here is an 86-residue protein sequence, read N- to C-terminus: Exodeoxyribonuclease 7 small subunit (86 aa).

A disordered region spans residues 1-26; that stretch reads MQDELFETEKIPPKNTKNTKNAPKKS.

This sequence belongs to the XseB family. In terms of assembly, heterooligomer composed of large and small subunits.

The protein localises to the cytoplasm. The enzyme catalyses Exonucleolytic cleavage in either 5'- to 3'- or 3'- to 5'-direction to yield nucleoside 5'-phosphates.. Bidirectionally degrades single-stranded DNA into large acid-insoluble oligonucleotides, which are then degraded further into small acid-soluble oligonucleotides. The polypeptide is Exodeoxyribonuclease 7 small subunit (Helicobacter pylori (strain ATCC 700392 / 26695) (Campylobacter pylori)).